A 692-amino-acid chain; its full sequence is Elongation factor G (692 aa).

A tr-type G domain is found at 8-283 (NRIRNIGIAA…AVIDYLPAPT (276 aa)). Residues 17 to 24 (AHIDAGKT), 81 to 85 (DTPGH), and 135 to 138 (NKMD) contribute to the GTP site.

This sequence belongs to the TRAFAC class translation factor GTPase superfamily. Classic translation factor GTPase family. EF-G/EF-2 subfamily.

The protein resides in the cytoplasm. In terms of biological role, catalyzes the GTP-dependent ribosomal translocation step during translation elongation. During this step, the ribosome changes from the pre-translocational (PRE) to the post-translocational (POST) state as the newly formed A-site-bound peptidyl-tRNA and P-site-bound deacylated tRNA move to the P and E sites, respectively. Catalyzes the coordinated movement of the two tRNA molecules, the mRNA and conformational changes in the ribosome. This chain is Elongation factor G, found in Helicobacter pylori (strain HPAG1).